The sequence spans 190 residues: Transcription factor bHLH162 (190 aa).

Over residues M1–R12 the composition is skewed to polar residues. A disordered region spans residues M1–K21. In terms of domain architecture, bHLH spans S11–L63.

The protein belongs to the bHLH protein family.

The protein resides in the nucleus. The polypeptide is Transcription factor bHLH162 (Arabidopsis thaliana (Mouse-ear cress)).